The sequence spans 320 residues: Carbonic anhydrase 6 (320 aa).

A signal peptide spans 1-17 (MRALALLLALPLLGARA). The region spanning 21 to 278 (SLWTYSEGAL…LNGRVVESNF (258 aa)) is the Alpha-carbonic anhydrase domain. Cysteine 42 and cysteine 224 form a disulfide bridge. Catalysis depends on histidine 85, which acts as the Proton donor/acceptor. The Zn(2+) site is built by histidine 111, histidine 113, and histidine 138. 220–221 (TT) contributes to the substrate binding site. N-linked (GlcNAc...) asparagine glycosylation occurs at asparagine 256.

Belongs to the alpha-carbonic anhydrase family. Zn(2+) is required as a cofactor.

The protein localises to the secreted. The catalysed reaction is hydrogencarbonate + H(+) = CO2 + H2O. Its function is as follows. Reversible hydration of carbon dioxide. Its role in saliva is unknown. The chain is Carbonic anhydrase 6 (CA6) from Canis lupus familiaris (Dog).